We begin with the raw amino-acid sequence, 355 residues long: Gentisate 1,2-dioxygenase (355 aa).

One can recognise a Cupin type-2 domain in the interval 106–174 (MQLLLPGEWA…GNEPVVWLDV (69 aa)).

The protein belongs to the gentisate 1,2-dioxygenase family.

The catalysed reaction is 2,5-dihydroxybenzoate + O2 = 3-maleylpyruvate + H(+). It functions in the pathway aromatic compound metabolism; naphthalene degradation. Its function is as follows. Catalyzes the oxygen-dependent ring fission of gentisate between the carboxyl and proximal hydroxyl groups at positions 1 and 2 of the aromatic ring to form maleylpyruvate. Can also catalyze oxidation of alkyl- and halogenated gentisates. Exhibits higher affinity for 3-substituted gentisates than for gentisate but has higher activity with gentisate. The polypeptide is Gentisate 1,2-dioxygenase (Ralstonia sp).